Consider the following 132-residue polypeptide: MTKTVLLYIATAVAAILGCYLPYCYVKRDGSLLLIPAALSLIAFVGLLVLYPAASGRVYAAYGGVYILTAFLWLRFIDGIKLSPPGLSGRGGGIVRGRDHDRRLAPRRGLRGAESGVDLAGFACGCPTRRSH.

The next 3 membrane-spanning stretches (helical) occupy residues 5-25, 32-52, and 60-80; these read VLLYIATAVAAILGCYLPYCY, LLLIPAALSLIAFVGLLVLYP, and AAYGGVYILTAFLWLRFIDGI.

The protein belongs to the UPF0060 family.

The protein localises to the cell inner membrane. The chain is UPF0060 membrane protein SG1469 from Sodalis glossinidius (strain morsitans).